A 345-amino-acid polypeptide reads, in one-letter code: NADH-ubiquinone oxidoreductase chain 2 (345 aa).

10 helical membrane passes run 1 to 21, 25 to 45, 59 to 79, 96 to 116, 123 to 143, 148 to 168, 191 to 211, 240 to 260, 274 to 294, and 324 to 344; these read MNPI…ILTM, HWVS…PIIS, YFLI…TNAY, IMLS…FWLP, PMIT…ALLI, LIPP…GGLG, ITIT…YILL, TASL…LSGF, HLTP…MFYL, and SLLS…PLMI.

Belongs to the complex I subunit 2 family.

It is found in the mitochondrion inner membrane. It catalyses the reaction a ubiquinone + NADH + 5 H(+)(in) = a ubiquinol + NAD(+) + 4 H(+)(out). Functionally, core subunit of the mitochondrial membrane respiratory chain NADH dehydrogenase (Complex I) that is believed to belong to the minimal assembly required for catalysis. Complex I functions in the transfer of electrons from NADH to the respiratory chain. The immediate electron acceptor for the enzyme is believed to be ubiquinone. The chain is NADH-ubiquinone oxidoreductase chain 2 (MT-ND2) from Varanus timorensis (Timor monitor).